A 324-amino-acid chain; its full sequence is Mating-type protein A-3 (324 aa).

A DNA-binding region (HMG box) is located at residues 147-215; that stretch reads TSRPRNQFVL…RHRAENPHLY (69 aa).

The protein resides in the nucleus. Required, together with mating-type protein A-2, for efficient ascospore formation. This chain is Mating-type protein A-3 (mtA-3), found in Neurospora crassa (strain ATCC 24698 / 74-OR23-1A / CBS 708.71 / DSM 1257 / FGSC 987).